The chain runs to 119 residues: Small ribosomal subunit protein uS13m (119 aa).

Belongs to the universal ribosomal protein uS13 family. Part of the small ribosomal subunit.

It localises to the mitochondrion. In terms of biological role, located at the top of the head of the small subunit, it contacts several helices of the small subunit rRNA. The sequence is that of Small ribosomal subunit protein uS13m (RPS13) from Acanthamoeba castellanii (Amoeba).